A 450-amino-acid chain; its full sequence is MGSFLLCLLLVQLQWCLCSNVLDDLLQQTNIAFLSQQDVIGVIPVNQIPLVGVELCSMFETVGDGQDTLAAMLQTGVQTLVMDIGYDEDAGGWQMCGRTSLSEGISTVSRQIERLFPTLYANLVVLVLRGGAAEAHYEALRDAIGRVGRWTYSAEKVKATSPHLNSLLDDQEKRVLVVALDDSLCEALGTVAFGPEDVAYVEGNDTIDCSEHTDSWSFIEREFHWTDVREYVRLGCSPVITGKSVANISELEALVKVAQVWSWGAGEPALTDANSEMQRCASLGYDSATERATWKSTSCRQNLPVLCQAVNDRYSWLVGTRNLRFDQLNMDSCPSGYKPSVPRTPLEQREVERYLSEHHPSDGQYWIYLNSISVEKCWVVGGPETPCPYVALVSTRNFAAMIVTSSILVLLLLVLIILLDLVRVPIQDNRRSWKRALGSYSKAETEGVPM.

A signal peptide spans 1-18 (MGSFLLCLLLVQLQWCLC). At 19 to 397 (SNVLDDLLQQ…PYVALVSTRN (379 aa)) the chain is on the extracellular side. N-linked (GlcNAc...) asparagine glycans are attached at residues Asn-204 and Asn-247. A helical transmembrane segment spans residues 398–418 (FAAMIVTSSILVLLLLVLIIL). Residues 419 to 450 (LDLVRVPIQDNRRSWKRALGSYSKAETEGVPM) are Cytoplasmic-facing.

Belongs to the MTC6 family.

Its subcellular location is the membrane. Its function is as follows. May be involved in telomere capping. This is Maintenance of telomere capping protein 6 (MTC6) from Eremothecium gossypii (strain ATCC 10895 / CBS 109.51 / FGSC 9923 / NRRL Y-1056) (Yeast).